A 973-amino-acid chain; its full sequence is Vacuolar membrane protease (973 aa).

Residues 1-15 lie on the Cytoplasmic side of the membrane; the sequence is MARQYSRTNPLGFTP. A helical transmembrane segment spans residues 16 to 36; sequence WPVTIITALVYLALVIPLLVV. Over 37 to 383 the chain is Vacuolar; that stretch reads QHVVPSAPGS…STLAVFELHT (347 aa). Asn-52 and Asn-115 each carry an N-linked (GlcNAc...) asparagine glycan. The Zn(2+) site is built by His-167 and Asp-179. Catalysis depends on Glu-213, which acts as the Proton acceptor. Residues Glu-214, Glu-239, and His-312 each contribute to the Zn(2+) site. The chain crosses the membrane as a helical span at residues 384-404; that stretch reads LFALSVTLLIVAPLVLLATSI. Topologically, residues 405-438 are cytoplasmic; the sequence is ALVRADRMYLFRSTARVPGSDDFDEGVSLQGVRG. Residues 439-459 form a helical membrane-spanning segment; it reads FFRFPFLLVIPTGVAVGLAYL. Over 460-469 the chain is Vacuolar; sequence VTKINPYIIH. A helical membrane pass occupies residues 470–490; the sequence is SSEYAVWSMMISAWVFLAWFV. The Cytoplasmic portion of the chain corresponds to 491-504; the sequence is SRVADFARPSAFHR. Residues 505–525 form a helical membrane-spanning segment; it reads VYVLTWMFVAEWVLLVIATVY. Over 526 to 529 the chain is Vacuolar; sequence ENRY. Residues 530-550 form a helical membrane-spanning segment; sequence GLAGGYFVFFALSGTFLATWI. At 551–674 the chain is on the cytoplasmic side; sequence SYLELFALPR…GLPKWTWVLQ (124 aa). The segment at 572 to 623 is disordered; the sequence is SRYASNHGSRLGTSSGEHGMDDAEDEEDDDGDDEDEARNVEEEPTESTSLLR. Residues 574–587 show a composition bias toward polar residues; it reads YASNHGSRLGTSSG. The segment covering 593-607 has biased composition (acidic residues); sequence DAEDEEDDDGDDEDE. The chain crosses the membrane as a helical span at residues 675 to 695; it reads FLLSAPIVLILVGPLALLLTA. At 696 to 708 the chain is on the vacuolar side; that stretch reads ALRQTAQDGSSPL. Residues 709 to 729 form a helical membrane-spanning segment; sequence FVYIAIAVLTTLLVTPLLPFI. Over 730–735 the chain is Cytoplasmic; it reads HRYTHH. A helical membrane pass occupies residues 736–756; that stretch reads IPLFLLLVFTGTLIYNLVAFP. At 757-973 the chain is on the vacuolar side; sequence FSPSNRLKLF…LVEGSRRFEV (217 aa). N-linked (GlcNAc...) asparagine glycans are attached at residues Asn-803 and Asn-839.

This sequence belongs to the peptidase M28 family. It depends on Zn(2+) as a cofactor.

It is found in the vacuole membrane. Its function is as follows. May be involved in vacuolar sorting and osmoregulation. This chain is Vacuolar membrane protease, found in Aspergillus clavatus (strain ATCC 1007 / CBS 513.65 / DSM 816 / NCTC 3887 / NRRL 1 / QM 1276 / 107).